The primary structure comprises 383 residues: L-Ala-D/L-Glu epimerase (383 aa).

Residues arginine 68, tyrosine 94, and 198 to 200 (KVK) each bind substrate. Aspartate 224, glutamate 251, and aspartate 276 together coordinate Mg(2+). Residues lysine 298, 326-328 (CMT), and 348-350 (DLD) each bind substrate.

Belongs to the mandelate racemase/muconate lactonizing enzyme family. The cofactor is Mg(2+).

The enzyme catalyses L-alanyl-L-glutamate = L-alanyl-D-glutamate. Its function is as follows. Catalyzes the epimerization of L-Ala-D-Glu to L-Ala-L-Glu and may play a role in the metabolism of the murein peptide, of which L-Ala-D-Glu is a component. Is also able to catalyze the epimerization of L-Ala-D-Asp, L-Ala-L-Glu, L-Ala-L-Ser, L-Ala-L-Pro, L-Ala-L-L-Val, L-Ala-L-Thr, L-Ala-L-Leu, L-Ala-L-Ile and L-Gly-L-Glu (in vitro). This is L-Ala-D/L-Glu epimerase from Bacteroides thetaiotaomicron (strain ATCC 29148 / DSM 2079 / JCM 5827 / CCUG 10774 / NCTC 10582 / VPI-5482 / E50).